The chain runs to 110 residues: ATP synthase subunit c (110 aa).

3 consecutive transmembrane segments (helical) span residues 4–24 (FFVILMVALVVVLTASAVFAA), 37–57 (ATAGALIGLGAAAGGGGAGMG), and 81–101 (FIVGLALIESLVIYVLVFVLI).

The protein belongs to the ATPase C chain family. As to quaternary structure, F-type ATPases have 2 components, F(1) - the catalytic core - and F(0) - the membrane proton channel. F(1) has five subunits: alpha(3), beta(3), gamma(1), delta(1), epsilon(1). F(0) has three main subunits: a(1), b(2) and c(10-14). The alpha and beta chains form an alternating ring which encloses part of the gamma chain. F(1) is attached to F(0) by a central stalk formed by the gamma and epsilon chains, while a peripheral stalk is formed by the delta and b chains.

It is found in the cell inner membrane. Its function is as follows. F(1)F(0) ATP synthase produces ATP from ADP in the presence of a proton or sodium gradient. F-type ATPases consist of two structural domains, F(1) containing the extramembraneous catalytic core and F(0) containing the membrane proton channel, linked together by a central stalk and a peripheral stalk. During catalysis, ATP synthesis in the catalytic domain of F(1) is coupled via a rotary mechanism of the central stalk subunits to proton translocation. Functionally, key component of the F(0) channel; it plays a direct role in translocation across the membrane. A homomeric c-ring of between 10-14 subunits forms the central stalk rotor element with the F(1) delta and epsilon subunits. This chain is ATP synthase subunit c, found in Thermodesulfovibrio yellowstonii (strain ATCC 51303 / DSM 11347 / YP87).